We begin with the raw amino-acid sequence, 363 residues long: Type-2 angiotensin II receptor (363 aa).

The Extracellular segment spans residues 1–45 (MKGNSTLATTSKNITSGLHFGLVNISGNNESTLNCSQKPSDKHLD). N4, N13, N24, N29, and N34 each carry an N-linked (GlcNAc...) asparagine glycan. Intrachain disulfides connect C35–C290 and C117–C195. Residues 46–70 (AIPILYYIIFVIGFLVNIVVVTLFC) traverse the membrane as a helical segment. Residues 71–80 (CQKGPKKVSS) are Cytoplasmic-facing. A helical membrane pass occupies residues 81 to 104 (IYIFNLAVADLLLLATLPLWATYY). Residues Y103 and Y104 each contribute to the angiotensin II site. Residues 105–114 (SYRYDWLFGP) are Extracellular-facing. A helical membrane pass occupies residues 115–140 (VMCKVFGSFLTLNMFASIFFITCMSV). Residues 141 to 159 (DRYQSVIYPFLSQRRNPWQ) are Cytoplasmic-facing. Residues 160 to 181 (ASYIVPLVWCMACLSSLPTFYF) traverse the membrane as a helical segment. Angiotensin II-binding residues include R182, Y204, and K215. Residues 182 to 206 (RDVRTIEYLGVNACIMAFPPEKYAQ) lie on the Extracellular side of the membrane. The chain crosses the membrane as a helical span at residues 207-232 (WSAGIALMKNILGFIIPLIFIATCYF). Over 233–257 (GIRKHLLKTNSYGKNRITRDQVLKM) the chain is Cytoplasmic. The helical transmembrane segment at 258–281 (AAAVVLAFIICWLPFHVLTFLDAL) threads the bilayer. Position 279 (D279) interacts with angiotensin II. Residues 282–294 (AWMGVINSCEVIA) lie on the Extracellular side of the membrane. A helical transmembrane segment spans residues 295–320 (VIDLALPFAILLGFTNSCVNPFLYCF). D297 serves as a coordination point for angiotensin II. Residues 321-363 (VGNRFQQKLRSVFRVPITWLQGKRESMSCRKSSSLREMETFVS) lie on the Cytoplasmic side of the membrane. The segment at 324-333 (RFQQKLRSVF) is helix VIII.

Belongs to the G-protein coupled receptor 1 family. As to quaternary structure, interacts with MTUS1. In terms of tissue distribution, in adult, highly expressed in myometrium with lower levels in adrenal gland and fallopian tube. Expressed in the cerebellum. Very highly expressed in fetal kidney and intestine.

The protein localises to the cell membrane. Functionally, receptor for angiotensin II, a vasoconstricting peptide. Signals primarily via a non-canonical G-protein- and beta-arrestin independent pathways. Cooperates with MTUS1 to inhibit ERK2 activation and cell proliferation. The chain is Type-2 angiotensin II receptor from Homo sapiens (Human).